The primary structure comprises 116 residues: Putative pterin-4-alpha-carbinolamine dehydratase (116 aa).

Belongs to the pterin-4-alpha-carbinolamine dehydratase family.

It catalyses the reaction (4aS,6R)-4a-hydroxy-L-erythro-5,6,7,8-tetrahydrobiopterin = (6R)-L-erythro-6,7-dihydrobiopterin + H2O. The chain is Putative pterin-4-alpha-carbinolamine dehydratase from Stenotrophomonas maltophilia (strain K279a).